We begin with the raw amino-acid sequence, 183 residues long: Ras-like protein (183 aa).

10 to 17 provides a ligand contact to GTP; the sequence is GAGGVGKS. The Effector region motif lies at 32–40; the sequence is YDPTIEDSY. Residues 57–61 and 116–119 each bind GTP; these read DTAGQ and NKCD.

It belongs to the small GTPase superfamily. Ras family.

It localises to the cell membrane. It carries out the reaction GTP + H2O = GDP + phosphate + H(+). Alternates between an inactive form bound to GDP and an active form bound to GTP. Activated by a guanine nucleotide-exchange factor (GEF) and inactivated by a GTPase-activating protein (GAP). Ras proteins bind GDP/GTP and possess intrinsic GTPase activity. The sequence is that of Ras-like protein from Carassius auratus (Goldfish).